Consider the following 962-residue polypeptide: Protease 3 (962 aa).

Positions 1–23 (MPRSIWFKALLLFVALWAPLSQA) are cleaved as a signal peptide. His88 contributes to the Zn(2+) binding site. Glu91 functions as the Proton acceptor in the catalytic mechanism. Zn(2+)-binding residues include His92 and Glu169.

This sequence belongs to the peptidase M16 family. As to quaternary structure, monomer. It depends on Zn(2+) as a cofactor.

The protein resides in the periplasm. The catalysed reaction is Preferential cleavage of 16-Tyr-|-Leu-17 and 25-Phe-|-Tyr-26 bonds of oxidized insulin B chain. Also acts on other substrates of Mw less than 7 kDa such as insulin and glucagon.. Its function is as follows. Endopeptidase that degrades small peptides of less than 7 kDa, such as glucagon and insulin. In Escherichia coli O6:H1 (strain CFT073 / ATCC 700928 / UPEC), this protein is Protease 3 (ptrA).